The chain runs to 413 residues: Multifunctional CCA protein (413 aa).

2 residues coordinate ATP: Gly-8 and Arg-11. Residues Gly-8 and Arg-11 each coordinate CTP. Residues Asp-21 and Asp-23 each coordinate Mg(2+). ATP contacts are provided by Arg-91, Arg-143, and Arg-146. Residues Arg-91, Arg-143, and Arg-146 each coordinate CTP. The HD domain occupies Thr-232 to Leu-333.

It belongs to the tRNA nucleotidyltransferase/poly(A) polymerase family. Bacterial CCA-adding enzyme type 1 subfamily. Monomer. Can also form homodimers and oligomers. Requires Mg(2+) as cofactor. The cofactor is Ni(2+).

The enzyme catalyses a tRNA precursor + 2 CTP + ATP = a tRNA with a 3' CCA end + 3 diphosphate. It catalyses the reaction a tRNA with a 3' CCA end + 2 CTP + ATP = a tRNA with a 3' CCACCA end + 3 diphosphate. Catalyzes the addition and repair of the essential 3'-terminal CCA sequence in tRNAs without using a nucleic acid template. Adds these three nucleotides in the order of C, C, and A to the tRNA nucleotide-73, using CTP and ATP as substrates and producing inorganic pyrophosphate. tRNA 3'-terminal CCA addition is required both for tRNA processing and repair. Also involved in tRNA surveillance by mediating tandem CCA addition to generate a CCACCA at the 3' terminus of unstable tRNAs. While stable tRNAs receive only 3'-terminal CCA, unstable tRNAs are marked with CCACCA and rapidly degraded. The chain is Multifunctional CCA protein from Burkholderia ambifaria (strain MC40-6).